We begin with the raw amino-acid sequence, 362 residues long: GTPase Obg (362 aa).

The Obg domain occupies 1 to 159 (MKFIDEARIE…RKLKLELKVL (159 aa)). The disordered stretch occupies residues 129–148 (HFKSSTNRAPRQKTNGKEGE). Residues 130–141 (FKSSTNRAPRQK) are compositionally biased toward polar residues. The OBG-type G domain occupies 160–334 (ADVGLLGMPN…LCYALQDYLD (175 aa)). GTP contacts are provided by residues 166–173 (GMPNAGKS), 191–195 (FTTLH), 213–216 (DIPG), 284–287 (NKVD), and 315–317 (SAL). Residues Ser173 and Thr193 each contribute to the Mg(2+) site. The interval 340–362 (RDDAEERAADPRYQDQAADKSPD) is disordered.

The protein belongs to the TRAFAC class OBG-HflX-like GTPase superfamily. OBG GTPase family. Monomer. Mg(2+) serves as cofactor.

The protein localises to the cytoplasm. Functionally, an essential GTPase which binds GTP, GDP and possibly (p)ppGpp with moderate affinity, with high nucleotide exchange rates and a fairly low GTP hydrolysis rate. Plays a role in control of the cell cycle, stress response, ribosome biogenesis and in those bacteria that undergo differentiation, in morphogenesis control. In Polynucleobacter asymbioticus (strain DSM 18221 / CIP 109841 / QLW-P1DMWA-1) (Polynucleobacter necessarius subsp. asymbioticus), this protein is GTPase Obg.